A 225-amino-acid polypeptide reads, in one-letter code: NAD(P)H-quinone oxidoreductase subunit K, chloroplastic (225 aa).

[4Fe-4S] cluster contacts are provided by cysteine 43, cysteine 44, cysteine 108, and cysteine 139.

This sequence belongs to the complex I 20 kDa subunit family. As to quaternary structure, NDH is composed of at least 16 different subunits, 5 of which are encoded in the nucleus. Requires [4Fe-4S] cluster as cofactor.

It localises to the plastid. Its subcellular location is the chloroplast thylakoid membrane. The catalysed reaction is a plastoquinone + NADH + (n+1) H(+)(in) = a plastoquinol + NAD(+) + n H(+)(out). It catalyses the reaction a plastoquinone + NADPH + (n+1) H(+)(in) = a plastoquinol + NADP(+) + n H(+)(out). In terms of biological role, NDH shuttles electrons from NAD(P)H:plastoquinone, via FMN and iron-sulfur (Fe-S) centers, to quinones in the photosynthetic chain and possibly in a chloroplast respiratory chain. The immediate electron acceptor for the enzyme in this species is believed to be plastoquinone. Couples the redox reaction to proton translocation, and thus conserves the redox energy in a proton gradient. This chain is NAD(P)H-quinone oxidoreductase subunit K, chloroplastic, found in Nymphaea alba (White water-lily).